The following is a 321-amino-acid chain: Lipoyl synthase (321 aa).

[4Fe-4S] cluster contacts are provided by C60, C65, C71, C86, C90, C93, and S299. Residues 72–288 enclose the Radical SAM core domain; that stretch reads WEKKHATFMI…ETIGRTKGFL (217 aa).

It belongs to the radical SAM superfamily. Lipoyl synthase family. Requires [4Fe-4S] cluster as cofactor.

Its subcellular location is the cytoplasm. The catalysed reaction is [[Fe-S] cluster scaffold protein carrying a second [4Fe-4S](2+) cluster] + N(6)-octanoyl-L-lysyl-[protein] + 2 oxidized [2Fe-2S]-[ferredoxin] + 2 S-adenosyl-L-methionine + 4 H(+) = [[Fe-S] cluster scaffold protein] + N(6)-[(R)-dihydrolipoyl]-L-lysyl-[protein] + 4 Fe(3+) + 2 hydrogen sulfide + 2 5'-deoxyadenosine + 2 L-methionine + 2 reduced [2Fe-2S]-[ferredoxin]. It participates in protein modification; protein lipoylation via endogenous pathway; protein N(6)-(lipoyl)lysine from octanoyl-[acyl-carrier-protein]: step 2/2. Functionally, catalyzes the radical-mediated insertion of two sulfur atoms into the C-6 and C-8 positions of the octanoyl moiety bound to the lipoyl domains of lipoate-dependent enzymes, thereby converting the octanoylated domains into lipoylated derivatives. The protein is Lipoyl synthase of Brucella anthropi (strain ATCC 49188 / DSM 6882 / CCUG 24695 / JCM 21032 / LMG 3331 / NBRC 15819 / NCTC 12168 / Alc 37) (Ochrobactrum anthropi).